We begin with the raw amino-acid sequence, 707 residues long: MAP kinase-interacting serine/threonine-protein kinase mnk-1 (707 aa).

Over residues Met1–Ser24 the composition is skewed to polar residues. 2 disordered regions span residues Met1–Val29 and Arg101–Arg131. In terms of domain architecture, Protein kinase spans Lys203–Leu493. ATP-binding positions include Leu209–Val217 and Lys232. The active-site Proton acceptor is the Asp325. 2 disordered regions span residues Arg589–Asp628 and Phe688–Val707.

This sequence belongs to the protein kinase superfamily. CAMK Ser/Thr protein kinase family. Mg(2+) serves as cofactor. Expressed in pharynx, intestine, vulva and body wall muscles.

The protein localises to the nucleus. The protein resides in the cytoplasm. It carries out the reaction L-seryl-[protein] + ATP = O-phospho-L-seryl-[protein] + ADP + H(+). The enzyme catalyses L-threonyl-[protein] + ATP = O-phospho-L-threonyl-[protein] + ADP + H(+). Its function is as follows. Serine/threonine-protein kinase which is required in the germline to positively regulate lifespan. May play a role in body wall muscle contraction. May be involved in embryonic cytokinesis. The sequence is that of MAP kinase-interacting serine/threonine-protein kinase mnk-1 from Caenorhabditis elegans.